The chain runs to 312 residues: Olfactory receptor 10P22 (312 aa).

Residues methionine 1 to histidine 26 lie on the Extracellular side of the membrane. Asparagine 5 is a glycosylation site (N-linked (GlcNAc...) asparagine). Residues leucine 27–leucine 47 form a helical membrane-spanning segment. The Cytoplasmic portion of the chain corresponds to leucine 48 to serine 57. Residues proline 58 to valine 78 traverse the membrane as a helical segment. Topologically, residues proline 79–cysteine 89 are extracellular. Residues proline 90–alanine 110 form a helical membrane-spanning segment. The Cytoplasmic segment spans residues glutamate 111–glycine 143. The chain crosses the membrane as a helical span at residues leucine 144–phenylalanine 164. The Extracellular portion of the chain corresponds to threonine 165–threonine 205. A helical membrane pass occupies residues phenylalanine 206 to leucine 226. The Cytoplasmic segment spans residues glycine 227 to lysine 236. Residues leucine 237–valine 257 form a helical membrane-spanning segment. Topologically, residues alanine 258–aspartate 271 are extracellular. The chain crosses the membrane as a helical span at residues glutamine 272–leucine 292. Topologically, residues arginine 293–proline 312 are cytoplasmic.

The protein belongs to the G-protein coupled receptor 1 family.

It is found in the cell membrane. Its function is as follows. Odorant receptor. The sequence is that of Olfactory receptor 10P22 from Mus musculus (Mouse).